We begin with the raw amino-acid sequence, 231 residues long: Phosphoheptose isomerase (231 aa).

The SIS domain maps to 35 to 190 (LAAVLGGGGR…CAAFDAALER (156 aa)). Position 50–52 (50–52 (NGG)) interacts with substrate. His59 and Glu63 together coordinate Zn(2+). Substrate-binding positions include Glu63, 92-93 (ND), 118-120 (STS), Ser123, and Gln170. Residues Gln170 and His178 each contribute to the Zn(2+) site. Low complexity-rich tracts occupy residues 197-206 (AAGSAASTGR) and 214-225 (ASTGRAAGAGRA). The disordered stretch occupies residues 197–231 (AAGSAASTGRAARRERAASTGRAAGAGRAAQRKRR).

The protein belongs to the SIS family. GmhA subfamily. Zn(2+) serves as cofactor.

Its subcellular location is the cytoplasm. The enzyme catalyses 2 D-sedoheptulose 7-phosphate = D-glycero-alpha-D-manno-heptose 7-phosphate + D-glycero-beta-D-manno-heptose 7-phosphate. Its pathway is carbohydrate biosynthesis; D-glycero-D-manno-heptose 7-phosphate biosynthesis; D-glycero-alpha-D-manno-heptose 7-phosphate and D-glycero-beta-D-manno-heptose 7-phosphate from sedoheptulose 7-phosphate: step 1/1. In terms of biological role, catalyzes the isomerization of sedoheptulose 7-phosphate in D-glycero-D-manno-heptose 7-phosphate. The protein is Phosphoheptose isomerase of Streptomyces coelicolor (strain ATCC BAA-471 / A3(2) / M145).